A 229-amino-acid polypeptide reads, in one-letter code: Homeobox-leucine zipper protein HOX3 (229 aa).

Positions 1 to 82 (MMGATSPSGL…GPHRPKKLRL (82 aa)) are disordered. The span at 52-68 (GEEEEFPMGSVEEDEEE) shows a compositional bias: acidic residues. The homeobox DNA-binding region spans 75–134 (HRPKKLRLSKEQSRLLEESFRLNHTLTPKQKEALAIKLKLRPRQVEVWFQNRRARTKLKQ). The leucine-zipper stretch occupies residues 133 to 177 (KQTEMECEYLKRCFGSLTEENRRLQREVEELRAMRVAPPTVLSPH). The interval 198–229 (AATGPPAVRPPPSSAAAAAPSPFHPRRPSAAF) is disordered.

It belongs to the HD-ZIP homeobox family. Class II subfamily. As to quaternary structure, homodimer. May form a heterodimer with HOX1, HOX2 or HOX7. As to expression, expressed in seedlings, roots, leaves, nodes, internodes, flowers and embryo.

The protein resides in the nucleus. Its function is as follows. Probable transcription repressor that binds to the DNA sequence 5'-CAAT[GC]ATTG-3'. In Oryza sativa subsp. indica (Rice), this protein is Homeobox-leucine zipper protein HOX3 (HOX3).